Consider the following 271-residue polypeptide: Mannosyl-3-phosphoglycerate phosphatase (271 aa).

The active-site Nucleophile is the Asp-13. Asp-13, Asp-15, and Asp-214 together coordinate Mg(2+).

Belongs to the HAD-like hydrolase superfamily. MPGP family. The cofactor is Mg(2+).

It is found in the cytoplasm. The catalysed reaction is 2-O-(alpha-D-mannosyl)-3-phosphoglycerate + H2O = (2R)-2-O-(alpha-D-mannosyl)-glycerate + phosphate. The chain is Mannosyl-3-phosphoglycerate phosphatase (yedP) from Escherichia coli O6:H1 (strain CFT073 / ATCC 700928 / UPEC).